The primary structure comprises 262 residues: Ribosome-recycling factor, mitochondrial (262 aa).

The transit peptide at 1–55 directs the protein to the mitochondrion; that stretch reads MALGIRCFRLLHPAFSSYLADLSRPVSEVPMKTVRGRQRDHIQYSAHPAVPVRQF.

Belongs to the RRF family.

It localises to the mitochondrion. Its function is as follows. Responsible for the disassembly of ribosomes from messenger RNA at the termination of mitochondrial protein biosynthesis. Acts in collaboration with GFM2. Promotes mitochondrial ribosome recycling by dissolution of intersubunit contacts. This chain is Ribosome-recycling factor, mitochondrial (Mrrf), found in Rattus norvegicus (Rat).